The chain runs to 169 residues: Cytochrome c-type biogenesis protein CcmE (169 aa).

The Cytoplasmic segment spans residues 1 to 7 (MTRKSRR). The chain crosses the membrane as a helical; Signal-anchor for type II membrane protein span at residues 8-28 (LILIAACGAVLALALGLILSA). The Periplasmic segment spans residues 29–169 (MSGSIVFFRS…DATLGQRSER (141 aa)). Histidine 122 and tyrosine 126 together coordinate heme. A disordered region spans residues 135–169 (LKAQGRWQEGGGKEAPKDAAKPASADATLGQRSER). The segment covering 145-154 (GGKEAPKDAA) has biased composition (basic and acidic residues).

The protein belongs to the CcmE/CycJ family.

It is found in the cell inner membrane. Its function is as follows. Heme chaperone required for the biogenesis of c-type cytochromes. Transiently binds heme delivered by CcmC and transfers the heme to apo-cytochromes in a process facilitated by CcmF and CcmH. In Methylorubrum populi (strain ATCC BAA-705 / NCIMB 13946 / BJ001) (Methylobacterium populi), this protein is Cytochrome c-type biogenesis protein CcmE.